A 328-amino-acid polypeptide reads, in one-letter code: N-acetyl-gamma-glutamyl-phosphate reductase (328 aa).

Cys-143 is an active-site residue.

This sequence belongs to the NAGSA dehydrogenase family. Type 1 subfamily.

It is found in the cytoplasm. The catalysed reaction is N-acetyl-L-glutamate 5-semialdehyde + phosphate + NADP(+) = N-acetyl-L-glutamyl 5-phosphate + NADPH + H(+). It participates in amino-acid biosynthesis; L-arginine biosynthesis; N(2)-acetyl-L-ornithine from L-glutamate: step 3/4. Catalyzes the NADPH-dependent reduction of N-acetyl-5-glutamyl phosphate to yield N-acetyl-L-glutamate 5-semialdehyde. The chain is N-acetyl-gamma-glutamyl-phosphate reductase from Methanosphaerula palustris (strain ATCC BAA-1556 / DSM 19958 / E1-9c).